The primary structure comprises 161 residues: Small ribosomal subunit protein bS6 (161 aa).

The segment at 107 to 161 (KGDERERGFRGPKPAGRFESGRGGAGGARRGYDDREEFRARNEREDGRDTDGEAE) is disordered. The segment covering 136-161 (RGYDDREEFRARNEREDGRDTDGEAE) has biased composition (basic and acidic residues).

It belongs to the bacterial ribosomal protein bS6 family.

Its function is as follows. Binds together with bS18 to 16S ribosomal RNA. The protein is Small ribosomal subunit protein bS6 of Gluconacetobacter diazotrophicus (strain ATCC 49037 / DSM 5601 / CCUG 37298 / CIP 103539 / LMG 7603 / PAl5).